A 54-amino-acid polypeptide reads, in one-letter code: UPF0391 membrane protein pRL90066 (54 aa).

The next 2 membrane-spanning stretches (helical) occupy residues 5–25 (ALVFLVVALIAGVLGFGGIAG) and 28–48 (ASIAQVLFFIFLVLFVVSLVM).

It belongs to the UPF0391 family.

Its subcellular location is the cell membrane. In Rhizobium johnstonii (strain DSM 114642 / LMG 32736 / 3841) (Rhizobium leguminosarum bv. viciae), this protein is UPF0391 membrane protein pRL90066.